The following is a 389-amino-acid chain: MDLFEYQARDMFEAHGVPVLAGIVANTAEEAKAAAEKIGGVTVVKAQVKVGGRGKAGGVKVAKTADEAFEYAGNILGMDIKGHTVHKVMIAQGADIAEEYYFSVLLDRANRNYLAMCSVEGGVEIEVLAVERPEALARIAVDPAVGIDQAKAEEIVDAAGFAADVLDGVIETIKKLWDVFQKEDATLVEVNPLVKTGDGRILALDGKVTLDANADFRHPDHEALEDKDSADPLEAKAKENDLNYVKLDGEVGIIGNGAGLVMSTLDVVAYAGESHGNVKPANFLDIGGGASAEVMAAGLDVILNDAQVKSVFVNVFGGITACDAVANGIVKALEILGTSANKPLVVRLDGNNVEEGRRILTEANHPLVTQAATMDEGADKAAELAHAAK.

The ATP-grasp domain maps to 9 to 236 (RDMFEAHGVP…KDSADPLEAK (228 aa)). ATP-binding positions include lysine 45, 52-54 (GRG), alanine 94, and glutamate 99. Mg(2+) is bound by residues asparagine 191 and aspartate 205. Substrate contacts are provided by residues asparagine 256 and 318-320 (GIT).

This sequence belongs to the succinate/malate CoA ligase beta subunit family. Heterotetramer of two alpha and two beta subunits. It depends on Mg(2+) as a cofactor.

It catalyses the reaction succinate + ATP + CoA = succinyl-CoA + ADP + phosphate. It carries out the reaction GTP + succinate + CoA = succinyl-CoA + GDP + phosphate. It participates in carbohydrate metabolism; tricarboxylic acid cycle; succinate from succinyl-CoA (ligase route): step 1/1. Functionally, succinyl-CoA synthetase functions in the citric acid cycle (TCA), coupling the hydrolysis of succinyl-CoA to the synthesis of either ATP or GTP and thus represents the only step of substrate-level phosphorylation in the TCA. The beta subunit provides nucleotide specificity of the enzyme and binds the substrate succinate, while the binding sites for coenzyme A and phosphate are found in the alpha subunit. The sequence is that of Succinate--CoA ligase [ADP-forming] subunit beta from Renibacterium salmoninarum (strain ATCC 33209 / DSM 20767 / JCM 11484 / NBRC 15589 / NCIMB 2235).